Here is an 89-residue protein sequence, read N- to C-terminus: MAISQERKNEIIKEYRVHETDTGSPEVQIAVLTAEINAVNEHLRTHKKDHHSRRGLLKMVGRRRHLLNYLRSKDIQRYRELIKSLGIRR.

This sequence belongs to the universal ribosomal protein uS15 family. Part of the 30S ribosomal subunit. Forms a bridge to the 50S subunit in the 70S ribosome, contacting the 23S rRNA.

In terms of biological role, one of the primary rRNA binding proteins, it binds directly to 16S rRNA where it helps nucleate assembly of the platform of the 30S subunit by binding and bridging several RNA helices of the 16S rRNA. Forms an intersubunit bridge (bridge B4) with the 23S rRNA of the 50S subunit in the ribosome. The chain is Small ribosomal subunit protein uS15 from Staphylococcus aureus (strain JH1).